A 605-amino-acid chain; its full sequence is Replication protein E1 (605 aa).

The Nuclear localization signal motif lies at 76-78 (KRK). Residues S81 and S89 each carry the phosphoserine; by host modification. A Nuclear export signal motif is present at residues 88–97 (LSPRLESISL). Positions 145–308 (GSGDVDIHYT…TILGHKSAEA (164 aa)) are DNA-binding region. The SF3 helicase domain maps to 407–557 (INFISFLAAL…FPMKADNTPQ (151 aa)). 433–440 (GPPNTGKS) serves as a coordination point for ATP. K514 is covalently cross-linked (Glycyl lysine isopeptide (Lys-Gly) (interchain with G-Cter in SUMO)).

This sequence belongs to the papillomaviridae E1 protein family. In terms of assembly, can form hexamers. Interacts with E2 protein; this interaction increases E1 DNA binding specificity. Interacts with host DNA polymerase subunit POLA2. Interacts with host single stranded DNA-binding protein RPA1. Interacts with host TOP1; this interaction stimulates the enzymatic activity of TOP1. Phosphorylated. Post-translationally, sumoylated.

The protein resides in the host nucleus. It catalyses the reaction Couples ATP hydrolysis with the unwinding of duplex DNA by translocating in the 3'-5' direction.. The catalysed reaction is ATP + H2O = ADP + phosphate + H(+). In terms of biological role, ATP-dependent DNA 3'-5' helicase required for initiation of viral DNA replication. It forms a complex with the viral E2 protein. The E1-E2 complex binds to the replication origin which contains binding sites for both proteins. During the initial step, a dimer of E1 interacts with a dimer of protein E2 leading to a complex that binds the viral origin of replication with high specificity. Then, a second dimer of E1 displaces the E2 dimer in an ATP-dependent manner to form the E1 tetramer. Following this, two E1 monomers are added to each half of the site, which results in the formation of two E1 trimers on the viral ori. Subsequently, two hexamers will be created. The double hexamer acts as a bi-directional helicase machinery and unwinds the viral DNA and then recruits the host DNA polymerase to start replication. The protein is Replication protein E1 of Human papillomavirus 47.